A 443-amino-acid chain; its full sequence is Protoheme IX farnesyltransferase, mitochondrial (443 aa).

The tract at residues 68–113 is disordered; that stretch reads LSQRVKPKPEPPASPFLEHTSSGQARADEDELPSFPAPSRPLSRKP. 7 helical membrane-spanning segments follow: residues 174–194, 230–250, 252–272, 286–306, 308–328, 363–383, and 410–430; these read AGFA…TSLG, ISPL…VALL, WGVN…YTCC, VGAV…TGSL, AGAL…FNAL, LIAL…FPVI, and LFFC…TCKQ.

This sequence belongs to the UbiA prenyltransferase family.

It is found in the mitochondrion membrane. The enzyme catalyses heme b + (2E,6E)-farnesyl diphosphate + H2O = Fe(II)-heme o + diphosphate. Its function is as follows. Converts protoheme IX and farnesyl diphosphate to heme O. In Mus musculus (Mouse), this protein is Protoheme IX farnesyltransferase, mitochondrial (Cox10).